We begin with the raw amino-acid sequence, 329 residues long: Biotin--protein ligase 2 (329 aa).

Residues 67-251 (ISTHRFGRFL…KFENFFDLFM (185 aa)) enclose the BPL/LPL catalytic domain. Residues 84–85 (ST), Gln-107, 111–113 (RGR), and Lys-182 contribute to the biotin site.

This sequence belongs to the biotin--protein ligase family. In terms of tissue distribution, highly expressed in seeds. Expressed in roots, leaves, stems, flowers and siliques.

The protein resides in the cytoplasm. Functionally, seems to have no or limited implication in biotin-dependent carboxylase biotinylation in planta. The polypeptide is Biotin--protein ligase 2 (HCS2) (Arabidopsis thaliana (Mouse-ear cress)).